Here is a 1049-residue protein sequence, read N- to C-terminus: Cellulose synthase A catalytic subunit 4 [UDP-forming] (1049 aa).

Topologically, residues 1–215 (MEPNTMASFD…ISSSKISPYR (215 aa)) are cytoplasmic. Zn(2+) contacts are provided by Cys-23, Cys-26, Cys-42, Cys-45, Cys-50, Cys-53, Cys-65, and Cys-68. An RING-type; degenerate zinc finger spans residues 23 to 69 (CKVCGDEVKDDDNGQTFVACHVCVYPVCKPCYEYERSNGNKCCPQCN). A disordered region spans residues 76 to 98 (KGSPKIAGDEENNGPDDSDDELN). The segment covering 84-96 (DEENNGPDDSDDE) has biased composition (acidic residues). At Ser-135 the chain carries Phosphoserine. The chain crosses the membrane as a helical span at residues 216–236 (IVIVLRLVILVFFFRFRILTP). Residues 237–239 (AKD) lie on the Extracellular side of the membrane. The helical transmembrane segment at 240-260 (AYPLWLISVICEIWFALSWIL) threads the bilayer. Residues 261–831 (DQFPKWFPIN…INTIVYPFTS (571 aa)) are Cytoplasmic-facing. UDP-alpha-D-glucose-binding residues include Ser-299, Lys-305, Glu-306, and Asp-335. The active site involves Asp-335. Positions 389-416 (VKDRRAMKREYEEFKVRINALVAKAQKK) form a coiled coil. Lys-476 serves as a coordination point for UDP-alpha-D-glucose. Positions 477 and 501 each coordinate Mn(2+). The active site involves Asp-748. A helical membrane pass occupies residues 832–852 (IPLLAYCTIPAVCLLTGKFII). The Extracellular portion of the chain corresponds to 853 to 857 (PTINN). The chain crosses the membrane as a helical span at residues 858 to 878 (FASIWFLALFLSIIATAILEL). Over 879 to 895 (RWSGVSINDLWRNEQFW) the chain is Cytoplasmic. A helical membrane pass occupies residues 896–916 (VIGGVSAHLFAVFQGLLKVLF). Residues 917–945 (GVDTNFTVTSKGASDEADEFGDLYLFKWT) are Extracellular-facing. A glycan (N-linked (GlcNAc...) asparagine) is linked at Asn-921. Residues 946-966 (TLLIPPTTLIILNMVGVVAGV) traverse the membrane as a helical segment. Topologically, residues 967–977 (SDAINNGYGSW) are cytoplasmic. A helical membrane pass occupies residues 978–998 (GPLFGKLFFAFWVIVHLYPFL). The Extracellular segment spans residues 999–1007 (KGLMGRQNR). A helical membrane pass occupies residues 1008–1028 (TPTIVVLWSILLASIFSLVWV). The Cytoplasmic portion of the chain corresponds to 1029 to 1049 (RIDPFLPKQTGPLLKQCGVDC).

Belongs to the glycosyltransferase 2 family. Plant cellulose synthase subfamily. Interacts with CESA7 and CESA8. Assembly with CESA7 and CESA8 is required for functional complex and localization in secondary cell wall deposition sites. Interacts with STL1 and STL2, but not with GOT1. Zn(2+) is required as a cofactor. It depends on Mn(2+) as a cofactor. Post-translationally, S-acylated. Confined to secondary cell wall developing tissues such as xylems and interfascicular regions. Expressed in roots, hypocotyls, leaves, inflorescences and flowers.

The protein resides in the cell membrane. The enzyme catalyses [(1-&gt;4)-beta-D-glucosyl](n) + UDP-alpha-D-glucose = [(1-&gt;4)-beta-D-glucosyl](n+1) + UDP + H(+). The protein operates within glycan metabolism; plant cellulose biosynthesis. Its function is as follows. Catalytic subunit of cellulose synthase terminal complexes ('rosettes'), required for beta-1,4-glucan microfibril crystallization, a major mechanism of the cell wall formation. Involved in the secondary cell wall formation. Required for the xylem cell wall thickening. This is Cellulose synthase A catalytic subunit 4 [UDP-forming] from Arabidopsis thaliana (Mouse-ear cress).